The chain runs to 80 residues: UPF0291 protein LACR_1198 (80 aa).

Belongs to the UPF0291 family.

It localises to the cytoplasm. The sequence is that of UPF0291 protein LACR_1198 from Lactococcus lactis subsp. cremoris (strain SK11).